The chain runs to 367 residues: Alpha-2-HS-glycoprotein (367 aa).

An N-terminal signal peptide occupies residues 1 to 18 (MKSLVLLLCLAQLWGCHS). The 107-residue stretch at 27-133 (YRQPNCDDPE…KFSVVYAKCD (107 aa)) folds into the Cystatin fetuin-A-type 1 domain. Cystine bridges form between cysteine 32–cysteine 358, cysteine 89–cysteine 100, cysteine 114–cysteine 132, cysteine 146–cysteine 149, cysteine 208–cysteine 219, and cysteine 230–cysteine 247. Phosphoserine is present on serine 134. Phosphoserine; by FAM20C is present on residues serine 135 and serine 138. The 112-residue stretch at 144–255 (KVCQDCPLLA…TCMVFQTQPV (112 aa)) folds into the Cystatin fetuin-A-type 2 domain. Asparagine 156 and asparagine 176 each carry an N-linked (GlcNAc...) (complex) asparagine glycan. The disordered stretch occupies residues 255 to 298 (VSSQPQPEGANEAVPTPVVDPDAPPSPPLGAPGLPPAGSPPDSH). Residue threonine 270 is glycosylated (O-linked (GalNAc...) threonine). The span at 276-293 (DAPPSPPLGAPGLPPAGS) shows a compositional bias: pro residues. O-linked (GalNAc...) serine glycans are attached at residues serine 280 and serine 293. The propeptide at 301 to 340 (LAAPPGHQLHRAHYDLRHTFMGVVSLGSPSGEVSHPRKTR) is connecting peptide. Residue threonine 319 is modified to Phosphothreonine; by FAM20C. Phosphoserine; by FAM20C is present on residues serine 325, serine 328, and serine 330. O-linked (GalNAc...) threonine glycans are attached at residues threonine 339 and threonine 341. A glycan (O-linked (GalNAc...) serine) is linked at serine 346.

Belongs to the fetuin family. Alpha-2-HS glycoprotein derives from this precursor, when the connecting peptide is cleaved off. The two chains A and B are held together by a single disulfide bond. Phosphorylated by FAM20C in the extracellular medium. In terms of processing, O- and N-glycosylated. O-glycosylated with core 1 or possibly core 8 glycans. N-glycan at Asn-156: Hex5HexNAc4; N-glycan heterogeneity at Asn-176: Hex5HexNAc4 (major) and Hex6HexNAc5 (minor). In terms of tissue distribution, synthesized in liver and selectively concentrated in bone matrix. Secreted in plasma. It is also found in dentin in much higher quantities than other plasma proteins.

It localises to the secreted. In terms of biological role, promotes endocytosis, possesses opsonic properties and influences the mineral phase of bone. Shows affinity for calcium and barium ions. The sequence is that of Alpha-2-HS-glycoprotein (AHSG) from Homo sapiens (Human).